A 293-amino-acid polypeptide reads, in one-letter code: MFTGSIVALVTPMDDKGNVDRASLRKLVDYHVASGTSAIVAVGTTGESATLSHDEHVNVVLQTLELADGRIPVIAGAGANATAEAIALTECFNHCGVVGCLSVTPYYNKPTQEGLYQHFRAIASCTDLPQILYNVPSRTGCDMLPETVARLAQINNIIAIKEATGNLSRVGQIQDLVNDDRFILLSGDDASALDFMCLGGKGVISVTANVAARQMAEMCRLTLAGDVHAARRLNQSLMPLHRDLFIEANPIPVKWATKVLGLIATDTLRLPLTPLSASARPAVERALQHAGVL.

T45 lines the pyruvate pocket. Residue Y133 is the Proton donor/acceptor of the active site. The active-site Schiff-base intermediate with substrate is K161. I204 contributes to the pyruvate binding site.

This sequence belongs to the DapA family. Homotetramer; dimer of dimers.

The protein resides in the cytoplasm. The enzyme catalyses L-aspartate 4-semialdehyde + pyruvate = (2S,4S)-4-hydroxy-2,3,4,5-tetrahydrodipicolinate + H2O + H(+). Its pathway is amino-acid biosynthesis; L-lysine biosynthesis via DAP pathway; (S)-tetrahydrodipicolinate from L-aspartate: step 3/4. Catalyzes the condensation of (S)-aspartate-beta-semialdehyde [(S)-ASA] and pyruvate to 4-hydroxy-tetrahydrodipicolinate (HTPA). This is 4-hydroxy-tetrahydrodipicolinate synthase from Edwardsiella ictaluri (strain 93-146).